Here is a 617-residue protein sequence, read N- to C-terminus: MHFDDLPVLPTTPGVYIFRKGGVPIYIGKANNLRSRVSQHFKAGGKSGKFTKLAESLEFISAANEVEALVLEANLIKQHRPHYNVLLKDDKHYPFLKLTNEAYPMLVVTRRVLKDGANYYGPYPDASAVRRVKHLIDTMFPLRKNSGLPMQKKPRPCLNYHMGRCLGPCIDAAQPDEYRQAVEDVKALLEGRAAPVIARLKEDMKVAAQGQDFEQAARLRDRVQAVEKLFGTEQHAFVSEETDLDFLGAAQAGEFAMVQLFRMRGGRVVGRDKRFLTGADETGLGEIIGAFVADYYTQATHVPPLILLPAEYEDAALWSEFLSRQAGRRVEMRTPKRGDKTDLIEMAQRNAAVGLDSEMALLERRGDHPGLDALKDVLALPERPWRIEGYDNSNLFGTNIVSGMVVFEGGRSRRGEHRRFKVRGLEHPDDYESMKQTIYRRFTGSLADKLPLPDLMLIDGGRGQVNAALDALKEAGVQVPVVGLAKREERLILPGRYGAQWWLETGTEVGVDRELLLPHTHPALRMLIGVRDEVHNYAVSYHRKLRGEGMLRSVFDDLPGIGQKRRDALLEHFTSLEDLAAAPVEHIAAVPGMTLRAAQSVKEFLQAREAQLPRAGG.

The GIY-YIG domain occupies 11–85 (TTPGVYIFRK…IKQHRPHYNV (75 aa)). A UVR domain is found at 194–229 (APVIARLKEDMKVAAQGQDFEQAARLRDRVQAVEKL).

This sequence belongs to the UvrC family. Interacts with UvrB in an incision complex.

The protein localises to the cytoplasm. In terms of biological role, the UvrABC repair system catalyzes the recognition and processing of DNA lesions. UvrC both incises the 5' and 3' sides of the lesion. The N-terminal half is responsible for the 3' incision and the C-terminal half is responsible for the 5' incision. This chain is UvrABC system protein C, found in Deinococcus radiodurans (strain ATCC 13939 / DSM 20539 / JCM 16871 / CCUG 27074 / LMG 4051 / NBRC 15346 / NCIMB 9279 / VKM B-1422 / R1).